Reading from the N-terminus, the 730-residue chain is Cyclin-T2 (730 aa).

The interaction with MDFIC and MDFI stretch occupies residues 1 to 300; it reads MASGRGASSR…SVTGVPTNPS (300 aa). Residues 12-147 form the Cyclin N-terminal domain; it reads FFTREQLENT…IMLQTLGFEI (136 aa). The segment at 250–300 is interaction with POLR2A; sequence RLKKIRNWRANQAARKPKVDGQVSETPLLGSSLVQNSILVDSVTGVPTNPS. Composition is skewed to polar residues over residues 341–350 and 360–389; these read TSYGLSSHQE and TEQL…SISL. A disordered region spans residues 341–430; the sequence is TSYGLSSHQE…GPISTTPGII (90 aa). Basic and acidic residues predominate over residues 398 to 412; that stretch reads DKISDHSSVKQEYTH. Residue K407 forms a Glycyl lysine isopeptide (Lys-Gly) (interchain with G-Cter in SUMO2) linkage. The residue at position 480 (S480) is a Phosphoserine. The segment at 497-652 is disordered; the sequence is DKKEKSGSLK…SSSSSSSSVK (156 aa). Basic and acidic residues-rich tracts occupy residues 517–543 and 552–565; these read SASK…EGSG and ISRD…EHPS. The span at 566 to 578 shows a compositional bias: basic residues; it reads SRHHTSSHKHSHS. Residues 579 to 588 show a composition bias toward low complexity; the sequence is HSGSSSGGSK. Position 601 is a phosphoserine (S601). 2 stretches are compositionally biased toward low complexity: residues 606-616 and 637-652; these read SSDGISSSSSS and SSKS…SSVK.

This sequence belongs to the cyclin family. Cyclin C subfamily. In terms of assembly, interacts with CDK9 to form P-TEFb. Interacts with POLR2A (via the C-terminal domain (CTD)); mediates transcriptional activity. Interacts with HEXIM1; mediates formation of a tripartite complex with KPNA2. Interacts with HEXIM2. Interacts with PKN1; enhances MYOD1-dependent transcription. P-TEFB complex interacts with RB1; promotes phosphorylation of RB1. P-TEFB complex interacts with MYOD1; promotes the transcriptional activity of MYOD1 through its CDK9-mediated phosphorylation. Interacts with MDFI and MDFIC. Interacts with MON1B; down-regulates CCNT2-mediated activation of viral promoters during herpes simplex virus 1/HHV-1 infection. As to quaternary structure, (Microbial infection) Interacts with HIV-2 and SIV Tat. Does not bind efficiently to the transactivation domain of the HIV-1 Tat. In terms of tissue distribution, ubiquitously expressed.

Its subcellular location is the cytoplasm. It is found in the perinuclear region. The protein localises to the nucleus. Its function is as follows. Regulatory subunit of the cyclin-dependent kinase pair (CDK9/cyclin T) complex, also called positive transcription elongation factor B (P-TEFB), which is proposed to facilitate the transition from abortive to production elongation by phosphorylating the CTD (carboxy-terminal domain) of the large subunit of RNA polymerase II (RNAP II). The activity of this complex is regulated by binding with 7SK snRNA. Plays a role during muscle differentiation; P-TEFB complex interacts with MYOD1; this tripartite complex promotes the transcriptional activity of MYOD1 through its CDK9-mediated phosphorylation and binds the chromatin of promoters and enhancers of muscle-specific genes; this event correlates with hyperphosphorylation of the CTD domain of RNA pol II. In addition, enhances MYOD1-dependent transcription through interaction with PKN1. Involved in early embryo development. (Microbial infection) Promotes transcriptional activation of early and late herpes simplex virus 1/HHV-1 promoters. The polypeptide is Cyclin-T2 (Homo sapiens (Human)).